The primary structure comprises 368 residues: Biglycan (368 aa).

The signal sequence occupies residues methionine 1–alanine 16. A propeptide spanning residues leucine 17 to lysine 37 is cleaved from the precursor. Cystine bridges form between cysteine 63–cysteine 69 and cysteine 67–cysteine 76. LRR repeat units lie at residues threonine 82–isoleucine 102, threonine 103–isoleucine 126, serine 127–leucine 150, glutamate 151–isoleucine 171, lysine 172–leucine 195, glutamate 196–leucine 220, serine 221–isoleucine 241, glutamine 242–isoleucine 265, arginine 266–leucine 289, serine 290–isoleucine 312, threonine 313–valine 342, and proline 343–lysine 368. N-linked (GlcNAc...) asparagine glycans are attached at residues asparagine 270 and asparagine 311. An intrachain disulfide couples cysteine 321 to cysteine 354.

It belongs to the small leucine-rich proteoglycan (SLRP) family. SLRP class I subfamily.

The protein resides in the secreted. It localises to the extracellular space. It is found in the extracellular matrix. Its function is as follows. May be involved in collagen fiber assembly. The chain is Biglycan (bgn) from Xenopus laevis (African clawed frog).